The sequence spans 810 residues: MPSGHNDKNANQESVEEAVLKYVGVGLDHQNHDPQLHTKDLENKHSKKQNIVESSSDVDVNNNDDSNRNEDNNDDSENISALNANESSSNVDHANSNEQHNAVMDWYLRQTAHNQQDDEDDENNNNTDNGNDSNNHFSQSDIVVDDDDDKNKKDAGVGVDDDHQSMAMAAVAAAYTLSKNNNNNNSIANDSNSRKRQHDNGNNHENSQKKRKNNNDDDDRQIGNVDPELTTLGDADDNDTNNDVIDRDQLVHKAIIDADSITQHPDFQQYLNTAADTDDNEKLKHIKDHLMRTHGLNHQNKNHNDDTDDLSNSTKQYSELQKDSMLDSSLNKSRNYMEVLPKVISQDTQPHQQKSPSHDNEAGSVDNSEISQLLQSAATKASSLVSLSSSSATPSTSRSNNSKAFDKAEDAALERFINEYEAIERLTRQQVCERIWSSDRPKDNFWNNIYKVLPYRSSSSIYKHMRRKYHIFEQRGKWTAEEEQELAKLCAEKEGQWAEIGKTLGRMPEDCRDRWRNYVKCGTNRASNRWSVEEEELLKKVISDMLEEAQQQQSQLHPNLLEEEQHLLQDDQNDHRNNDEDDDDTASAAAAAAAAIQEQQQLLQQKQQDDDDAIAAAAAAASSSLGDNKDEDKPHDSLGIQLDDNSQNSMVPAPSATSTHSKSLSNTIRRHNNKLRKSLMGNGKLDFKDIINWTIVSERMGGTRSRIQCRYKWNKLVKREAIAKIQTVKDDDMLWIFEKLRDLGITEDSQVDWDELAALKPGMKLNGLELKLCYERMKKKVKGYKQKSINEISKELVDYFSSNISMKTEN.

Basic and acidic residues-rich tracts occupy residues 1 to 10 (MPSGHNDKNA) and 29 to 44 (HQNH…LENK). 5 disordered regions span residues 1-80 (MPSG…ENIS), 114-161 (NQQD…GVDD), 180-243 (NNNN…TNND), 294-313 (HGLN…LSNS), and 346-365 (QDTQ…AGSV). 2 stretches are compositionally biased toward low complexity: residues 51 to 64 (IVES…NNND) and 124 to 135 (NNNTDNGNDSNN). Residues 149–161 (DKNKKDAGVGVDD) show a composition bias toward basic and acidic residues. A compositionally biased stretch (low complexity) spans 180 to 191 (NNNNNNSIANDS). A compositionally biased stretch (basic and acidic residues) spans 198–208 (HDNGNNHENSQ). Positions 346 to 355 (QDTQPHQQKS) are enriched in polar residues. Serine 355 carries the phosphoserine modification. The HTH myb-type domain maps to 470 to 523 (HIFEQRGKWTAEEEQELAKLCAEKEGQWAEIGKTLGRMPEDCRDRWRNYVKCGT). The H-T-H motif DNA-binding region spans 497-519 (WAEIGKTLGRMPEDCRDRWRNYV). Positions 572-667 (QNDHRNNDED…STHSKSLSNT (96 aa)) are disordered. Residues 586-606 (ASAAAAAAAAIQEQQQLLQQK) are compositionally biased toward low complexity. Positions 627–636 (DNKDEDKPHD) are enriched in basic and acidic residues. Polar residues predominate over residues 643 to 667 (DDNSQNSMVPAPSATSTHSKSLSNT). Residues 692–717 (NWTIVSERMGGTRSRIQCRYKWNKLV) enclose the Myb-like domain. Lysine 807 is covalently cross-linked (Glycyl lysine isopeptide (Lys-Gly) (interchain with G-Cter in SUMO)).

It localises to the nucleus. In terms of biological role, DNA-binding protein that recognizes sites within both the enhancer and the promoter of rRNA transcription, as well as upstream of many genes transcribed by RNA polymerase II. It is essential for cell growth. May stimulate or inhibit transcription. Specifically recognizes the sequence 5'-CCGGGTA-3' or 5'-CGGGTRR-3' (where R is any purine). A member of the general regulatory factors (GRFs) which act as genome partitioners. Acts as a chromatin insulator which are known as STARs (Subtelomeric anti-silencing region). STARs prevent negative or positive transcription influence by extending across chromatin to a promoter. In Saccharomyces cerevisiae (strain ATCC 204508 / S288c) (Baker's yeast), this protein is DNA-binding protein REB1 (REB1).